Reading from the N-terminus, the 456-residue chain is Probable flavin-containing monoamine oxidase A (456 aa).

Residue C394 is modified to S-8alpha-FAD cysteine.

It belongs to the flavin monoamine oxidase family. Requires FAD as cofactor.

The enzyme catalyses a secondary aliphatic amine + O2 + H2O = a primary amine + an aldehyde + H2O2. The sequence is that of Probable flavin-containing monoamine oxidase A (maoA) from Dictyostelium discoideum (Social amoeba).